The following is a 201-amino-acid chain: Alpha-1-acid glycoprotein (201 aa).

The first 18 residues, 1–18 (MALPWALAVLSLLPLLHA), serve as a signal peptide directing secretion. N-linked (GlcNAc...) asparagine glycans are attached at residues Asn25, Asn33, Asn87, Asn93, Asn103, and Asn169. A disulfide bond links Cys90 and Cys183.

Belongs to the calycin superfamily. Lipocalin family.

Its subcellular location is the secreted. Its function is as follows. Functions as a transport protein in the blood stream. Binds various ligands in the interior of its beta-barrel domain. Appears to function in modulating the activity of the immune system during the acute-phase reaction. This is Alpha-1-acid glycoprotein (ORM1) from Oryctolagus cuniculus (Rabbit).